A 1264-amino-acid polypeptide reads, in one-letter code: MMRKYLILLILLPALAVGIIPDVTTTVGDMVDTSYLIVNCRADIGTQELPPTKLELSSDKIKFTATDLSSTSTQACERSIVVTKTGLNILRVAGVDEFGYTAEAIDENKYIASCVINDEDKINRVLRIKITHPAMFDYTEWVCKTTASDGVETTARGGIDTGAILFDFENSDMELRTNGMKKDKKTLPMTFDCLIDGPFKTVIKQEIYGHKLPLFGVDMVLKKGNGDTSRIRGELFGRNKIDIDETPPLDDFTIRKESDLCGDTTRLKEITLAATNNNEFAANNIVIFLNTGFTNDDNSRTNYHNDQKKENAVLDPYRELLKTECFGRHTKTMVTTPINQLQHDTQCFRYDFIGSAQFISDNGHILAGVNKLSLHGGLINPTEEYDLTLNWEEDMDFQTERILLEMPSKIGAIYTGVRTGMPLRVVIPTHNLISDLYKEVAEAMVSFNRMEIKMLKLDQNKIAEVSCNSHKPFFYKAIVIMQKGCWIDTIDAPSRCLNTDDNRAFKVVTIEDYTFYLRRKIHSQYRDAVYGRDMDYRCMGSYYYCFSDYRRYNKLRDMVVVEQPIDTKLTNTILAASNAKYSSECVQDNVENLVQADFNVKGYTDGIADNLITHINTDLNMGSTMARKFPIAEITNSDVKCHCGQVVNTCNRYSFTNAINTLGTIYQPNTFPLVLTGSNNRESTMWCESMGFRSPIKKAKIMAANFACGGSTTPFIDFSDDLLNYLPTPIFTTVKDLTAAPEKRYIIECKDIPTACLSESSISINIIMDWIYDPPKTQSELGLDSEPEATGKTYKSKRVIWQKTNGPIFGGEFKIERASFYTNAFTNQPELYKNTVLPEDELFDYISDGYTHTFFKTYFPENEIKPTSATCSYGKINILKTATITDFSSWITTDKQVLCTGSNYQYNVKRIGNKIFTTDVTWPNDCPSVDNVKIELLSNNEADLLYSVVCSSQGTAIIDGLKTITYSEDPIPMDSHMDGNVAYCIPTDNGIKVVLATNLRDEYVNSLKLRTGYQINELSINQIDTAQVDTLGQGCITPPRHYPIDIAVDSTGIPQSFVFDCTIPEYLQSSMDTNPATCTSFPEVETVKLVIVYSGVFSSSVKHTIAMRGRTKGPCSGLANTECELLPQVNGLDKGIRYTIKDIYFSNLFKNTPGLSVRAYCTLPNIAETNTVTKELSKTMTRIKLRVPQNAPPETPHYDTEYMYKGVNRFYYYMSYTVLGVVVITILTMSIILCLKFRVKMKLSRQQMTSTGEGQQMLYIHAEV.

Positions Met-1–Gly-18 are cleaved as a signal peptide. The chain crosses the membrane as a helical span at residues Ser-1215 to Leu-1235.

The protein resides in the host membrane. This is an uncharacterized protein from Ostreid herpesvirus 1 (isolate France) (OsHV-1).